Reading from the N-terminus, the 465-residue chain is uncharacterized protein (465 aa).

Disordered regions lie at residues 95–173, 407–426, and 443–465; these read STST…RKDP, QEME…KSDK, and ANPI…SSKK. A compositionally biased stretch (basic residues) spans 118 to 137; that stretch reads KTGSKKVTRSKKSKKTKRRS. Positions 138–150 are enriched in low complexity; the sequence is STTVTTTTISNSK. Basic and acidic residues predominate over residues 153 to 173; it reads TPDKDKDSKDQRKQRTKRKDP. Over residues 451 to 465 the composition is skewed to basic residues; it reads MARRNRRSKGSSSKK.

This is an uncharacterized protein from Caenorhabditis elegans.